Reading from the N-terminus, the 81-residue chain is MSTSGQPPALKKYMDKQLQINLKANRMIVGTLRGFDQFMNLVVDNTVEVNGNEKNDIGMVVIRGNSVVTVEALEPVVNRIG.

The Sm domain maps to 5 to 76 (GQPPALKKYM…VVTVEALEPV (72 aa)).

It belongs to the snRNP Sm proteins family.

The protein resides in the nucleus. Its function is as follows. Probable common Sm protein, is found in U1 and U2 snRNPs and may be part of the spliceosome. The protein is Probable small nuclear ribonucleoprotein G (C29) of Medicago sativa (Alfalfa).